The sequence spans 131 residues: Arsenate reductase (131 aa).

Catalysis depends on nucleophile residues Cys10, Cys82, and Cys89. 2 cysteine pairs are disulfide-bonded: Cys10-Cys82 and Cys82-Cys89.

It belongs to the low molecular weight phosphotyrosine protein phosphatase family. Thioredoxin-coupled ArsC subfamily.

The protein localises to the cytoplasm. It catalyses the reaction arsenate + [thioredoxin]-dithiol + H(+) = arsenite + [thioredoxin]-disulfide + H2O. In terms of biological role, catalyzes the reduction of arsenate [As(V)] to arsenite [As(III)]. The chain is Arsenate reductase from Staphylococcus aureus (strain N315).